We begin with the raw amino-acid sequence, 594 residues long: UvrABC system protein C (594 aa).

The GIY-YIG domain maps to 14 to 91; the sequence is DQPGCYLMKD…IKKHDPKYNI (78 aa). Positions 196 to 231 constitute a UVR domain; the sequence is KEVRSELETKMYEASEKLEFERAKELRDQIAHIDAI.

The protein belongs to the UvrC family. As to quaternary structure, interacts with UvrB in an incision complex.

Its subcellular location is the cytoplasm. The UvrABC repair system catalyzes the recognition and processing of DNA lesions. UvrC both incises the 5' and 3' sides of the lesion. The N-terminal half is responsible for the 3' incision and the C-terminal half is responsible for the 5' incision. The polypeptide is UvrABC system protein C (Bacillus cereus (strain Q1)).